Here is a 749-residue protein sequence, read N- to C-terminus: MSVETLTNGMNNKQAEAVQTTEGPLLIMAGAGSGKTRVLTHRIAHLVQDLNVFPWRILAITFTNKAAREMRERIAALLSEDVARDIWVSTFHALAVRILRRDGEAIGLAKNFTIIDTSAQRTLMKRVINDLNLDTNQYDPRTILGMISNAKNDMLQPRDYAKAADNAFQETVAEVYTAYQAELKRSQSVDFDDLIMLTIDLFQSAPDVLARYQQQFEYLHVDEYQDTNDAQYTIVNLLAQRSKNLAVVGDADQSIYGWRGANMNNILNFEKDYPNAHTVMLEQNYRSTQNILDAANAVINHNNERVPKKLWTENGKGDQITYYRAQTEHDEANFILSNIQQLRETKHMAYSDFAVLYRTNAQSRNIEESLVKANMPYSMVGGHKFYERKEILDIMAYMSLITNPDDNAAFERVVNEPKRGLGATSLTRLRELANRLNVSYMKAIGSIELAPSITTKAASKFLTFAEMMHNLRQQSEFLNVTELTELVMTQSGYRQMLAEKNDPDSQARLENLEEFLSVTKEFDDKYQPEDPESIDPVTDFLGTTALMSDLDDFEEGDGAVTLMTLHAAKGLEFPVVFLIGLKEGIFPLSRAMMDEDLLEEERRLAYVGITRAMKKLFLTNAFSRLLYGRTQANEPSRFIAEISPELLETAYSGLSRDKTQKKTLPFDRKMQRATATTYQATPVTKITNGVTGGDQTSWSTGDKVSHKKWGVGTVISVSGRADDQELKVAFPSEGVKQLLAAFAPIQKVD.

In terms of domain architecture, UvrD-like helicase ATP-binding spans 8–288 (NGMNNKQAEA…VMLEQNYRST (281 aa)). ATP is bound by residues 32-37 (GSGKTR) and arginine 286. Residues 289–570 (QNILDAANAV…TLMTLHAAKG (282 aa)) enclose the UvrD-like helicase C-terminal domain.

It belongs to the helicase family. UvrD subfamily.

It catalyses the reaction Couples ATP hydrolysis with the unwinding of duplex DNA by translocating in the 3'-5' direction.. It carries out the reaction ATP + H2O = ADP + phosphate + H(+). Essential helicase. The protein is ATP-dependent DNA helicase PcrA (pcrA) of Leuconostoc citreum.